The chain runs to 344 residues: L-rhamnose-proton symporter (344 aa).

10 helical membrane passes run 4-24, 38-58, 68-88, 101-121, 137-157, 175-195, 214-234, 259-279, 290-310, and 323-343; these read AITM…CFYA, WSVG…ALLL, FSLS…IGNI, MGIG…TPII, TLLG…AGQL, LVLA…MNAA, LPSY…FCFI, VLLS…YAWG, ISWM…GLVL, and VLSL…IGMA.

The protein belongs to the L-rhamnose transporter (TC 2.A.7.6) family.

Its subcellular location is the cell inner membrane. It carries out the reaction L-rhamnopyranose(in) + H(+)(in) = L-rhamnopyranose(out) + H(+)(out). Its function is as follows. Uptake of L-rhamnose across the cytoplasmic membrane with the concomitant transport of protons into the cell (symport system). The sequence is that of L-rhamnose-proton symporter from Escherichia coli (strain ATCC 8739 / DSM 1576 / NBRC 3972 / NCIMB 8545 / WDCM 00012 / Crooks).